The sequence spans 330 residues: Ribose-phosphate pyrophosphokinase (330 aa).

Residues 40-42 and 99-100 contribute to the ATP site; these read DGE and RQ. Mg(2+) is bound by residues H133 and D174. Residue K197 is part of the active site. Residues R199, D223, and 227–231 each bind D-ribose 5-phosphate; that span reads DTGGT.

Belongs to the ribose-phosphate pyrophosphokinase family. Class I subfamily. As to quaternary structure, homohexamer. It depends on Mg(2+) as a cofactor.

The protein localises to the cytoplasm. It carries out the reaction D-ribose 5-phosphate + ATP = 5-phospho-alpha-D-ribose 1-diphosphate + AMP + H(+). The protein operates within metabolic intermediate biosynthesis; 5-phospho-alpha-D-ribose 1-diphosphate biosynthesis; 5-phospho-alpha-D-ribose 1-diphosphate from D-ribose 5-phosphate (route I): step 1/1. Its function is as follows. Involved in the biosynthesis of the central metabolite phospho-alpha-D-ribosyl-1-pyrophosphate (PRPP) via the transfer of pyrophosphoryl group from ATP to 1-hydroxyl of ribose-5-phosphate (Rib-5-P). The sequence is that of Ribose-phosphate pyrophosphokinase from Ureaplasma parvum serovar 3 (strain ATCC 700970).